The chain runs to 86 residues: Large ribosomal subunit protein bL31B (86 aa).

This sequence belongs to the bacterial ribosomal protein bL31 family. Type B subfamily. As to quaternary structure, part of the 50S ribosomal subunit.

The polypeptide is Large ribosomal subunit protein bL31B (Vibrio vulnificus (strain YJ016)).